The chain runs to 898 residues: Protein kintoun (898 aa).

Disordered regions lie at residues 558–680 (GELK…VESD) and 765–822 (ILGQ…SGIS). The span at 575-602 (INTRTVEDDTKVAKENVKKVDQETAHEG) shows a compositional bias: basic and acidic residues. Residues 603–616 (KKSKKNQRRKNKKR) are compositionally biased toward basic residues. The span at 641–656 (NEANSFEGTGSSSEAT) shows a compositional bias: polar residues.

It belongs to the PIH1 family. Kintoun subfamily.

The protein resides in the cytoplasm. Its function is as follows. Required for cytoplasmic pre-assembly of axonemal dyneins, thereby playing a central role in motility in cilia and flagella. Involved in pre-assembly of dynein arm complexes in the cytoplasm before intraflagellar transport loads them for the ciliary compartment. This is Protein kintoun from Aedes aegypti (Yellowfever mosquito).